We begin with the raw amino-acid sequence, 174 residues long: Crossover junction endodeoxyribonuclease RuvC (174 aa).

Catalysis depends on residues D8, E69, and D141. Residues D8, E69, and D141 each contribute to the Mg(2+) site.

The protein belongs to the RuvC family. Homodimer which binds Holliday junction (HJ) DNA. The HJ becomes 2-fold symmetrical on binding to RuvC with unstacked arms; it has a different conformation from HJ DNA in complex with RuvA. In the full resolvosome a probable DNA-RuvA(4)-RuvB(12)-RuvC(2) complex forms which resolves the HJ. The cofactor is Mg(2+).

It is found in the cytoplasm. The enzyme catalyses Endonucleolytic cleavage at a junction such as a reciprocal single-stranded crossover between two homologous DNA duplexes (Holliday junction).. In terms of biological role, the RuvA-RuvB-RuvC complex processes Holliday junction (HJ) DNA during genetic recombination and DNA repair. Endonuclease that resolves HJ intermediates. Cleaves cruciform DNA by making single-stranded nicks across the HJ at symmetrical positions within the homologous arms, yielding a 5'-phosphate and a 3'-hydroxyl group; requires a central core of homology in the junction. The consensus cleavage sequence is 5'-(A/T)TT(C/G)-3'. Cleavage occurs on the 3'-side of the TT dinucleotide at the point of strand exchange. HJ branch migration catalyzed by RuvA-RuvB allows RuvC to scan DNA until it finds its consensus sequence, where it cleaves and resolves the cruciform DNA. The protein is Crossover junction endodeoxyribonuclease RuvC of Xanthomonas euvesicatoria pv. vesicatoria (strain 85-10) (Xanthomonas campestris pv. vesicatoria).